The primary structure comprises 685 residues: Protein SPT2 homolog (685 aa).

Positions 1–570 (MDFREILMIA…PPLSGYRAAQ (570 aa)) are important for interaction with DNA. Residue Lys37 forms a Glycyl lysine isopeptide (Lys-Gly) (interchain with G-Cter in SUMO2) linkage. Positions 45–81 (QAFLKRKEEELRRKALEEKRRKEELVKKRIELKHDKK) form a coiled coil. Residues 79–168 (DKKARAMAKR…PLKSAPPPMN (90 aa)) are disordered. A compositionally biased stretch (basic and acidic residues) spans 101 to 111 (IEEKSKKRQAT). Residues 123–148 (YEMEEENEFLEYNHAESEQEYEEEQE) adopt a coiled-coil conformation. A Glycyl lysine isopeptide (Lys-Gly) (interchain with G-Cter in SUMO2) cross-link involves residue Lys187. Basic and acidic residues-rich tracts occupy residues 188-209 (VVKKSEERPMTAEELREREFLE) and 260-275 (HAEKKSRPSMANEKHL). Disordered regions lie at residues 188–615 (VVKK…QEEI) and 644–685 (SWKE…LKRR). A Phosphoserine modification is found at Ser278. Low complexity-rich tracts occupy residues 317-330 (SSTSSPSVPKTSAS), 365-385 (SPGVRQPGSSSSSAPGQPSTG), and 402-415 (GSSSSGPERSISGS). The span at 416-431 (KKPTNDSNPSRRTVSG) shows a compositional bias: polar residues. Over residues 435–501 (PGQPASSSGG…PGRSISGSIP (67 aa)) the composition is skewed to low complexity. Phosphoserine is present on Ser471. Polar residues predominate over residues 519–529 (GPGQTVSSSGP). The span at 542 to 553 (ISSKNIISRSSN) shows a compositional bias: low complexity. The segment at 571–685 (GPQRLPFPTG…RRRAKKLKRR (115 aa)) is important for interaction with histones. Lys582 carries the N6-acetyllysine modification. Over residues 587 to 613 (YEEEDDDDDEYDSEMEDFIEDEGEPQE) the composition is skewed to acidic residues. Position 599 is a phosphoserine (Ser599). Basic and acidic residues-rich tracts occupy residues 644–655 (SWKEQQKEEAKS) and 666–676 (EMRREEEEMQR). Positions 645–685 (WKEQQKEEAKSLRLGMQEDLEEMRREEEEMQRRRAKKLKRR) form a coiled coil.

The protein belongs to the SPT2 family. Interacts with histones. Interacts with a heterotetrameric complex formed by histone H3 and H4, especially when the histone tetramer is not bound to DNA. Interacts with histone H3.3.

It is found in the nucleus. The protein resides in the nucleolus. In terms of biological role, histone chaperone that stabilizes pre-existing histone tetramers and regulates replication-independent histone exchange on chromatin. Required for normal chromatin refolding in the coding region of transcribed genes, and for the suppression of spurious transcription. Binds DNA and histones and promotes nucleosome assembly (in vitro). Facilitates formation of tetrameric histone complexes containing histone H3 and H4. Modulates RNA polymerase 1-mediated transcription. Binds DNA, with a preference for branched DNA species, such as Y-form DNA and Holliday junction DNA. The polypeptide is Protein SPT2 homolog (SPTY2D1) (Homo sapiens (Human)).